The chain runs to 60 residues: Large ribosomal subunit protein bL32 (60 aa).

The protein belongs to the bacterial ribosomal protein bL32 family.

The polypeptide is Large ribosomal subunit protein bL32 (Streptococcus suis (strain 05ZYH33)).